A 298-amino-acid chain; its full sequence is Oxygen-dependent coproporphyrinogen-III oxidase (298 aa).

Residue S90 participates in substrate binding. The a divalent metal cation site is built by H94 and H104. H104 acts as the Proton donor in catalysis. A substrate-binding site is contributed by 106-108; that stretch reads NVR. A divalent metal cation-binding residues include H143 and H173. The interval 238 to 273 is important for dimerization; sequence YVEFNLVWDRGTLFGLQSGGRTESILMSLPPIVKWR. A substrate-binding site is contributed by 256 to 258; the sequence is GGR.

Belongs to the aerobic coproporphyrinogen-III oxidase family. As to quaternary structure, homodimer. A divalent metal cation serves as cofactor.

It localises to the cytoplasm. It catalyses the reaction coproporphyrinogen III + O2 + 2 H(+) = protoporphyrinogen IX + 2 CO2 + 2 H2O. The protein operates within porphyrin-containing compound metabolism; protoporphyrin-IX biosynthesis; protoporphyrinogen-IX from coproporphyrinogen-III (O2 route): step 1/1. Functionally, involved in the heme biosynthesis. Catalyzes the aerobic oxidative decarboxylation of propionate groups of rings A and B of coproporphyrinogen-III to yield the vinyl groups in protoporphyrinogen-IX. The sequence is that of Oxygen-dependent coproporphyrinogen-III oxidase from Dechloromonas aromatica (strain RCB).